Here is a 381-residue protein sequence, read N- to C-terminus: Ribosome assembly 1 protein (381 aa).

N-acetylmethionine is present on Met-1. Disordered regions lie at residues Met-1–Gln-38, Lys-164–Glu-216, and Phe-350–Lys-381. Ser-172 carries the post-translational modification Phosphoserine. The span at Asn-359–Asn-371 shows a compositional bias: basic residues.

Its subcellular location is the nucleus. Functionally, involved in a late nucleoplasmic step of 60S ribosomal subunit assembly. This is Ribosome assembly 1 protein (RSA1) from Saccharomyces cerevisiae (strain ATCC 204508 / S288c) (Baker's yeast).